A 455-amino-acid chain; its full sequence is Bifunctional protein GlmU (455 aa).

A pyrophosphorylase region spans residues 1-226 (MGLSVVILAA…EFEILGVNDR (226 aa)). UDP-N-acetyl-alpha-D-glucosamine is bound by residues 8–11 (LAAG), Lys22, Gln73, 78–79 (GT), 99–101 (YGD), Gly136, Glu151, Asn166, and Asn224. Residue Asp101 coordinates Mg(2+). Residue Asn224 participates in Mg(2+) binding. The segment at 227 to 247 (TQLASLERVWQRNVAEKIMAK) is linker. The segment at 248 to 455 (GVSIADPNRF…WQRSVKKTDK (208 aa)) is N-acetyltransferase. Positions 330 and 348 each coordinate UDP-N-acetyl-alpha-D-glucosamine. The Proton acceptor role is filled by His360. UDP-N-acetyl-alpha-D-glucosamine-binding residues include Tyr363 and Asn374. Acetyl-CoA is bound by residues Ala377, 383–384 (NY), Ser402, Ala420, and Arg437.

This sequence in the N-terminal section; belongs to the N-acetylglucosamine-1-phosphate uridyltransferase family. It in the C-terminal section; belongs to the transferase hexapeptide repeat family. In terms of assembly, homotrimer. Requires Mg(2+) as cofactor.

Its subcellular location is the cytoplasm. It catalyses the reaction alpha-D-glucosamine 1-phosphate + acetyl-CoA = N-acetyl-alpha-D-glucosamine 1-phosphate + CoA + H(+). The enzyme catalyses N-acetyl-alpha-D-glucosamine 1-phosphate + UTP + H(+) = UDP-N-acetyl-alpha-D-glucosamine + diphosphate. It functions in the pathway nucleotide-sugar biosynthesis; UDP-N-acetyl-alpha-D-glucosamine biosynthesis; N-acetyl-alpha-D-glucosamine 1-phosphate from alpha-D-glucosamine 6-phosphate (route II): step 2/2. It participates in nucleotide-sugar biosynthesis; UDP-N-acetyl-alpha-D-glucosamine biosynthesis; UDP-N-acetyl-alpha-D-glucosamine from N-acetyl-alpha-D-glucosamine 1-phosphate: step 1/1. The protein operates within bacterial outer membrane biogenesis; LPS lipid A biosynthesis. Its function is as follows. Catalyzes the last two sequential reactions in the de novo biosynthetic pathway for UDP-N-acetylglucosamine (UDP-GlcNAc). The C-terminal domain catalyzes the transfer of acetyl group from acetyl coenzyme A to glucosamine-1-phosphate (GlcN-1-P) to produce N-acetylglucosamine-1-phosphate (GlcNAc-1-P), which is converted into UDP-GlcNAc by the transfer of uridine 5-monophosphate (from uridine 5-triphosphate), a reaction catalyzed by the N-terminal domain. This is Bifunctional protein GlmU from Francisella tularensis subsp. tularensis (strain FSC 198).